The chain runs to 515 residues: Glucose-6-phosphate 1-dehydrogenase (515 aa).

The residue at position 2 (Ala-2) is an N-acetylalanine. Residue Ser-8 is modified to Phosphoserine. Thr-10 bears the Phosphothreonine mark. NADP(+) contacts are provided by residues 38–45 (GASGDLAK) and Arg-72. Lys-89 carries the post-translational modification N6-acetyllysine. NADP(+)-binding residues include Tyr-147 and Lys-171. D-glucose 6-phosphate is bound by residues Lys-171, 201–205 (HYLGK), Glu-239, and Asp-258. Lys-171 carries the post-translational modification N6-(2-hydroxyisobutyryl)lysine; alternate. Lys-171 carries the post-translational modification N6-acetyllysine; alternate. The Proton acceptor role is filled by His-263. Arg-357 provides a ligand contact to NADP(+). D-glucose 6-phosphate-binding residues include Lys-360 and Arg-365. NADP(+)-binding residues include Lys-366, Arg-370, and Arg-393. Gln-395 is a binding site for D-glucose 6-phosphate. NADP(+) is bound by residues 401–403 (YTK) and 421–423 (DLT). An N6-acetyllysine modification is found at Lys-403. N6-acetyllysine is present on Lys-432. Arg-487 provides a ligand contact to NADP(+). At Lys-497 the chain carries N6-acetyllysine. Positions 503 and 509 each coordinate NADP(+). Phosphotyrosine is present on Tyr-503.

This sequence belongs to the glucose-6-phosphate dehydrogenase family. As to quaternary structure, homotetramer; dimer of dimers. Interacts with SIRT2; the interaction is enhanced by H(2)O(2) treatment. Forms a ternary complex with ALDOB and TP53; this interaction is direct. ALDOB stabilizes the complex inhibiting G6PD activity and keeping oxidative pentose phosphate metabolism in check. Acetylated by ELP3 at Lys-403; acetylation inhibits its homodimerization and enzyme activity. Deacetylated by SIRT2 at Lys-403; deacetylation stimulates its enzyme activity.

It is found in the cytoplasm. The protein localises to the cytosol. It localises to the membrane. The catalysed reaction is D-glucose 6-phosphate + NADP(+) = 6-phospho-D-glucono-1,5-lactone + NADPH + H(+). It participates in carbohydrate degradation; pentose phosphate pathway; D-ribulose 5-phosphate from D-glucose 6-phosphate (oxidative stage): step 1/3. Its function is as follows. Cytosolic glucose-6-phosphate dehydrogenase that catalyzes the first and rate-limiting step of the oxidative branch within the pentose phosphate pathway/shunt, an alternative route to glycolysis for the dissimilation of carbohydrates and a major source of reducing power and metabolic intermediates for fatty acid and nucleic acid biosynthetic processes. This is Glucose-6-phosphate 1-dehydrogenase (G6PD) from Cricetulus griseus (Chinese hamster).